The chain runs to 102 residues: Small ribosomal subunit protein uS14 (102 aa).

This sequence belongs to the universal ribosomal protein uS14 family. Part of the 30S ribosomal subunit. Contacts proteins S3 and S10.

Functionally, binds 16S rRNA, required for the assembly of 30S particles and may also be responsible for determining the conformation of the 16S rRNA at the A site. The chain is Small ribosomal subunit protein uS14 from Wolbachia pipientis subsp. Culex pipiens (strain wPip).